Consider the following 66-residue polypeptide: Alpha-like toxin Bom3 (66 aa).

Residues 2 to 66 enclose the LCN-type CS-alpha/beta domain; the sequence is RDGYIAQPEN…PIVVGGEKCH (65 aa). Cystine bridges form between cysteine 12/cysteine 65, cysteine 16/cysteine 37, cysteine 23/cysteine 47, and cysteine 27/cysteine 49.

It belongs to the long (4 C-C) scorpion toxin superfamily. Sodium channel inhibitor family. Alpha subfamily. In terms of tissue distribution, expressed by the venom gland.

The protein localises to the secreted. Its function is as follows. Alpha toxins bind voltage-independently at site-3 of sodium channels (Nav) and inhibit the inactivation of the activated channels, thereby blocking neuronal transmission. As it competes neither with the classical alpha-toxin AaH2 nor the beta-toxin Css2, this toxin is an alpha-like toxin. The protein is Alpha-like toxin Bom3 of Buthus occitanus mardochei (Moroccan scorpion).